The sequence spans 242 residues: Large ribosomal subunit protein uL2 (242 aa).

Residues 201–242 (VDHPFGGGRHQHTGKPTTVSRKKVPPGRKVGHISARRTGVRK) form a disordered region. Residues 220–242 (SRKKVPPGRKVGHISARRTGVRK) are compositionally biased toward basic residues.

This sequence belongs to the universal ribosomal protein uL2 family. Part of the 50S ribosomal subunit. Forms a bridge to the 30S subunit in the 70S ribosome.

Its function is as follows. One of the primary rRNA binding proteins. Required for association of the 30S and 50S subunits to form the 70S ribosome, for tRNA binding and peptide bond formation. It has been suggested to have peptidyltransferase activity; this is somewhat controversial. Makes several contacts with the 16S rRNA in the 70S ribosome. This is Large ribosomal subunit protein uL2 from Methanocaldococcus jannaschii (strain ATCC 43067 / DSM 2661 / JAL-1 / JCM 10045 / NBRC 100440) (Methanococcus jannaschii).